Here is a 128-residue protein sequence, read N- to C-terminus: MRFAIVVTGPAYGTQQASSAFQFAQALIAEGHELSSVFFYREGVYNANQLTSPASDEFDLVRSWQQLNMQHGVALNICVAAALRRGVVDETEAGRLGLASSNLQTGFTLSGLGALAEASLTCDRVVQF.

Cys78 acts as the Cysteine persulfide intermediate in catalysis.

Belongs to the DsrE/TusD family. In terms of assembly, heterohexamer, formed by a dimer of trimers. The hexameric TusBCD complex contains 2 copies each of TusB, TusC and TusD. The TusBCD complex interacts with TusE.

It localises to the cytoplasm. Part of a sulfur-relay system required for 2-thiolation of 5-methylaminomethyl-2-thiouridine (mnm(5)s(2)U) at tRNA wobble positions. Accepts sulfur from TusA and transfers it in turn to TusE. The protein is Sulfurtransferase TusD of Escherichia coli O45:K1 (strain S88 / ExPEC).